The primary structure comprises 59 residues: MKAFYGILIIFILISMIDLSQQVFINATCTVSSQCRPKCIEAIGQAASKCINRKCKCYP.

The N-terminal stretch at 1–22 (MKAFYGILIIFILISMIDLSQQ) is a signal peptide. Intrachain disulfides connect Cys-29–Cys-50, Cys-35–Cys-55, and Cys-39–Cys-57.

Belongs to the short scorpion toxin superfamily. Potassium channel inhibitor family. Alpha-KTx 04 subfamily. Expressed by the venom gland.

The protein resides in the secreted. Functionally, potently blocks voltage-gated potassium channels (Kv). This Tityus serrulatus (Brazilian scorpion) protein is Putative potassium channel toxin Ts22.